Reading from the N-terminus, the 776-residue chain is A-type ATP synthase subunit A (776 aa).

This sequence belongs to the ATPase alpha/beta chains family. As to quaternary structure, has multiple subunits with at least A(3), B(3), C, D, E, F, H, I and proteolipid K(x). This protein undergoes a protein self splicing that involves a post-translational excision of the VDE intervening region (intein) followed by peptide ligation.

It localises to the cell membrane. The enzyme catalyses ATP + H2O + 4 H(+)(in) = ADP + phosphate + 5 H(+)(out). In terms of biological role, component of the A-type ATP synthase that produces ATP from ADP in the presence of a proton gradient across the membrane. The A chain is the catalytic subunit. In Thermoplasma volcanium (strain ATCC 51530 / DSM 4299 / JCM 9571 / NBRC 15438 / GSS1), this protein is A-type ATP synthase subunit A.